An 876-amino-acid chain; its full sequence is Senescence-induced receptor-like serine/threonine-protein kinase (876 aa).

Positions 1–24 (MAMLKSLSSILFTSFALLFFLVHA) are cleaved as a signal peptide. The Extracellular segment spans residues 25–517 (QDQSGFISID…SNTKKKNKNG (493 aa)). LRR repeat units follow at residues 415–438 (RVVS…SNLT), 439–462 (SIRK…ANLP), and 463–483 (NLTE…QRLH). A helical membrane pass occupies residues 518 to 538 (YIIPLVVVGIIVVLLTALALF). Residues 539-876 (RRFKKKQQRG…LDTEMVPRAR (338 aa)) lie on the Cytoplasmic side of the membrane. The Protein kinase domain maps to 574–847 (NNFERVIGKG…VVMELKQIVY (274 aa)). ATP contacts are provided by residues 580–588 (IGKGGFGKV) and K601. At Y646 the chain carries Phosphotyrosine. The active-site Proton acceptor is D697. S731 is subject to Phosphoserine. T732 bears the Phosphothreonine mark. Residue Y745 is modified to Phosphotyrosine.

The protein belongs to the protein kinase superfamily. Ser/Thr protein kinase family.

It is found in the membrane. Its function is as follows. Involved in innate immune response of plants. This chain is Senescence-induced receptor-like serine/threonine-protein kinase (SIRK), found in Arabidopsis thaliana (Mouse-ear cress).